A 426-amino-acid chain; its full sequence is Endothelin-1 receptor (426 aa).

Residues 1–20 (MGVLCFLASFWLALVGGAIA) form the signal peptide. Topologically, residues 21–80 (DNAERYSANLSSHVEDFTPFPGTEFNFLGTTLQPPNLALPSNGSMHGYCPQQTKITTAFK) are extracellular. N-linked (GlcNAc...) asparagine glycans are attached at residues Asn29 and Asn62. The helical transmembrane segment at 81-102 (YINTVISCTIFIVGMVGNATLL) threads the bilayer. Residues 103 to 112 (RIIYQNKCMR) are Cytoplasmic-facing. The chain crosses the membrane as a helical span at residues 113 to 132 (NGPNALIASLALGDLIYVVI). Topologically, residues 133–159 (DLPINVFKLLAGRWPFDHNDFGVFLCK) are extracellular. A disulfide bond links Cys158 and Cys239. The helical transmembrane segment at 160 to 181 (LFPFLQKSSVGITVLNLCALSV) threads the bilayer. Residues 182–205 (DRYRAVASWSRVQGIGIPLITAIE) lie on the Cytoplasmic side of the membrane. A helical membrane pass occupies residues 206–229 (IVSIWILSFILAIPEAIGFVMVPF). Residues 230–256 (EYKGEQHRTCMLNATTKFMEFYQDVKD) lie on the Extracellular side of the membrane. Residues 257–278 (WWLFGFYFCMPLVCTAIFYTLM) traverse the membrane as a helical segment. The Cytoplasmic portion of the chain corresponds to 279–306 (TCEMLNRRNGSLRIALSEHLKQRREVAK). Residues 307–328 (TVFCLVVIFALCWFPLHLSRIL) form a helical membrane-spanning segment. The Extracellular segment spans residues 329–347 (KKTVYDEMDKNRCELLSFL). A helical membrane pass occupies residues 348–372 (LLMDYIGINLATMNSCINPIALYFV). Residues 373–426 (SKKFKNCFQSCLCCCCHQSKSLMTSVPMNGTSIQWKNQEQNHNTERSSHKDSMN) are Cytoplasmic-facing. At Ser424 the chain carries Phosphoserine.

It belongs to the G-protein coupled receptor 1 family. Endothelin receptor subfamily. EDNRA sub-subfamily. Interacts with HDAC7 and KAT5. In terms of tissue distribution, predominantly expressed in vascular smooth muscle cells of a variety of issues, bronchial smooth muscle cells, myocardium, and the pituitary gland.

It is found in the cell membrane. Its function is as follows. Receptor for endothelin-1. Mediates its action by association with G proteins that activate a phosphatidylinositol-calcium second messenger system. The rank order of binding affinities for ET-A is: ET1 &gt; ET2 &gt;&gt; ET3. This chain is Endothelin-1 receptor, found in Rattus norvegicus (Rat).